Consider the following 623-residue polypeptide: Chaperone protein HtpG (623 aa).

Positions 1 to 336 (MSMKGQETRG…SNDLPLNVSR (336 aa)) are a; substrate-binding. The tract at residues 337-551 (EILQDSRVTQ…ADEMSTQMAK (215 aa)) is b. The tract at residues 552–623 (LFAAAGQEAP…IRRMNKLLSA (72 aa)) is c.

The protein belongs to the heat shock protein 90 family. Homodimer.

It localises to the cytoplasm. Its function is as follows. Molecular chaperone. Has ATPase activity. The sequence is that of Chaperone protein HtpG from Serratia proteamaculans (strain 568).